The chain runs to 363 residues: Ribosome-binding ATPase YchF (363 aa).

The OBG-type G domain maps to Phe-3–Leu-256. Asn-12 to Thr-17 is a binding site for ATP. Mg(2+) contacts are provided by Ser-16 and Thr-36. One can recognise a TGS domain in the interval Asn-278–Phe-361.

This sequence belongs to the TRAFAC class OBG-HflX-like GTPase superfamily. OBG GTPase family. YchF/OLA1 subfamily. The cofactor is Mg(2+).

In terms of biological role, ATPase that binds to both the 70S ribosome and the 50S ribosomal subunit in a nucleotide-independent manner. This chain is Ribosome-binding ATPase YchF, found in Haemophilus ducreyi (strain 35000HP / ATCC 700724).